The chain runs to 409 residues: MSRQKFERIKPHINIGTIGHVDHGKTTLTAAITMALSVTGNTKSKKYEEIDSSPEEKARGITINTAHVEYETKNRHYAHVDCPGHADYIKNMITGAAQMDGAILVISATDGPMPQTKEHILLAKQVGVPNLVVFLNKEDQIDDNELLELIELEIRETLNNYEFPGDEIPIITGSALLAIEALNKNPKIIKGENKWVDKILDLMDKIDSYIPTPIRDTDKDFLLAIEDVLSITGRGTVATGRIERGKIKVGETVELIGLKNIKSTTITGLEMFQKSLDEAIAGDNVGVLLRGIQKNEVERGMVIAKPGTIQPHIKFNSQVYILTKEEGGRHTPFFEGYKPQFYVRTTDVTGKIESFKSDDGTTVQMVMPGDKIKMIVELVQPIAIEKGMRFAIREGGKTVGAGVIINIID.

Residues 10-214 enclose the tr-type G domain; the sequence is KPHINIGTIG…KIDSYIPTPI (205 aa). The segment at 19 to 26 is G1; the sequence is GHVDHGKT. 19-26 lines the GTP pocket; it reads GHVDHGKT. Thr26 contacts Mg(2+). The tract at residues 60–64 is G2; the sequence is GITIN. Positions 81 to 84 are G3; the sequence is DCPG. GTP is bound by residues 81–85 and 136–139; these read DCPGH and NKED. Residues 136 to 139 are G4; sequence NKED. Residues 174–176 form a G5 region; that stretch reads SAL.

The protein belongs to the TRAFAC class translation factor GTPase superfamily. Classic translation factor GTPase family. EF-Tu/EF-1A subfamily.

Its subcellular location is the plastid. The catalysed reaction is GTP + H2O = GDP + phosphate + H(+). Functionally, GTP hydrolase that promotes the GTP-dependent binding of aminoacyl-tRNA to the A-site of ribosomes during protein biosynthesis. The polypeptide is Elongation factor Tu, plastid (tufA) (Euglena longa (Euglenophycean alga)).